The primary structure comprises 295 residues: Bifunctional protein FolD (295 aa).

Residues 169–171, threonine 196, and valine 237 contribute to the NADP(+) site; that span reads GRG.

The protein belongs to the tetrahydrofolate dehydrogenase/cyclohydrolase family. In terms of assembly, homodimer.

It catalyses the reaction (6R)-5,10-methylene-5,6,7,8-tetrahydrofolate + NADP(+) = (6R)-5,10-methenyltetrahydrofolate + NADPH. It carries out the reaction (6R)-5,10-methenyltetrahydrofolate + H2O = (6R)-10-formyltetrahydrofolate + H(+). Its pathway is one-carbon metabolism; tetrahydrofolate interconversion. In terms of biological role, catalyzes the oxidation of 5,10-methylenetetrahydrofolate to 5,10-methenyltetrahydrofolate and then the hydrolysis of 5,10-methenyltetrahydrofolate to 10-formyltetrahydrofolate. This chain is Bifunctional protein FolD, found in Kineococcus radiotolerans (strain ATCC BAA-149 / DSM 14245 / SRS30216).